We begin with the raw amino-acid sequence, 424 residues long: N-succinylarginine dihydrolase (424 aa).

Residues 19-28, Asn110, and 137-138 each bind substrate; these read AGLSPGNIAS and HR. Residue Glu174 is part of the active site. Substrate is bound at residue Arg207. His240 is a catalytic residue. 2 residues coordinate substrate: Asp242 and Asn349. Residue Cys355 is the Nucleophile of the active site.

The protein belongs to the succinylarginine dihydrolase family. Homodimer.

The enzyme catalyses N(2)-succinyl-L-arginine + 2 H2O + 2 H(+) = N(2)-succinyl-L-ornithine + 2 NH4(+) + CO2. It functions in the pathway amino-acid degradation; L-arginine degradation via AST pathway; L-glutamate and succinate from L-arginine: step 2/5. Its function is as follows. Catalyzes the hydrolysis of N(2)-succinylarginine into N(2)-succinylornithine, ammonia and CO(2). This chain is N-succinylarginine dihydrolase, found in Rhizorhabdus wittichii (strain DSM 6014 / CCUG 31198 / JCM 15750 / NBRC 105917 / EY 4224 / RW1) (Sphingomonas wittichii).